The chain runs to 307 residues: Alginate lyase (307 aa).

The N-terminal stretch at 1–20 (MLKSGVMVASLCLFSVPSRA) is a signal peptide.

It belongs to the polysaccharide lyase 7 family.

The protein localises to the secreted. It catalyses the reaction Eliminative cleavage of alginate to give oligosaccharides with 4-deoxy-alpha-L-erythro-hex-4-enuronosyl groups at their non-reducing ends and beta-D-mannuronate at their reducing end.. Degrades alginates that contain guluronic acid. The protein is Alginate lyase (alyA) of Klebsiella pneumoniae.